The following is a 256-amino-acid chain: MRILLTNDDGIHADGLAVLERIARTLSDDVWIVAPETDQSGLAHSLTLSEPLRLRQLGENRYALRGTPTDCVIMAIRKLLPGKPDLVLSGVNAGANLADDVTYSGTVAGAIEGTVHGVRSFALSQAYSYVAGHSIPWDVVETHAPALIAKLMRIDLPPGTFLNLNFPNCEPGEVAGVDVTSQGKLDFGLSVEERTDGRGLPYFWLRFGDRKGNFRPGTDIGTLRDNRISVTPLKLDLTDYAVQDIIAAALNSEVGS.

Positions 8, 9, 40, and 92 each coordinate a divalent metal cation.

Belongs to the SurE nucleotidase family. Requires a divalent metal cation as cofactor.

The protein resides in the cytoplasm. It catalyses the reaction a ribonucleoside 5'-phosphate + H2O = a ribonucleoside + phosphate. In terms of biological role, nucleotidase that shows phosphatase activity on nucleoside 5'-monophosphates. The protein is 5'-nucleotidase SurE of Allorhizobium ampelinum (strain ATCC BAA-846 / DSM 112012 / S4) (Agrobacterium vitis (strain S4)).